The sequence spans 483 residues: FAD-dependent oxidoreductase oblC (483 aa).

Positions 1 to 21 (MRSVTSLVSFSACLLASSVTA) are cleaved as a signal peptide. Residues N100, N137, N190, and N240 are each glycosylated (N-linked (GlcNAc...) asparagine).

This sequence belongs to the beta-cyclopiazonate dehydrogenase family. FAD serves as cofactor.

Its pathway is secondary metabolite biosynthesis; terpenoid biosynthesis. In terms of biological role, FAD-dependent oxidoreductase; part of the gene cluster that mediates the biosynthesis of the sesterterpenes ophiobolins, fungal phytotoxins with potential anti-cancer activities. The first step of the pathway is performed by the sesterterpene synthase oblA that possesses both prenyl transferase and terpene cyclase activity, converting isopentenyl diphosphate and dimethylallyl diphosphate into geranylfarnesyl diphosphate (GFPP) and further converting GFPP into ophiobolin F, respectively. Other sesterterpenoids (C(25) terpenoids) are found as minor products of oblA. The cytochrome P450 monooxygenase oblB then catalyzes a four-step oxidative transformation of ophiobolin F to yield ophiobolin C. The FAD-dependent oxidoreductase oblC might be involved in a later oxidation step that produces ophiobolin A. This Cochliobolus heterostrophus (strain C5 / ATCC 48332 / race O) (Southern corn leaf blight fungus) protein is FAD-dependent oxidoreductase oblC.